The chain runs to 169 residues: ATP synthase subunit b (169 aa).

Residues 11–31 (IPSFIAQIVNFGLLLGLLYLF) traverse the membrane as a helical segment.

The protein belongs to the ATPase B chain family. As to quaternary structure, F-type ATPases have 2 components, F(1) - the catalytic core - and F(0) - the membrane proton channel. F(1) has five subunits: alpha(3), beta(3), gamma(1), delta(1), epsilon(1). F(0) has three main subunits: a(1), b(2) and c(10-14). The alpha and beta chains form an alternating ring which encloses part of the gamma chain. F(1) is attached to F(0) by a central stalk formed by the gamma and epsilon chains, while a peripheral stalk is formed by the delta and b chains.

It localises to the cell membrane. F(1)F(0) ATP synthase produces ATP from ADP in the presence of a proton or sodium gradient. F-type ATPases consist of two structural domains, F(1) containing the extramembraneous catalytic core and F(0) containing the membrane proton channel, linked together by a central stalk and a peripheral stalk. During catalysis, ATP synthesis in the catalytic domain of F(1) is coupled via a rotary mechanism of the central stalk subunits to proton translocation. Its function is as follows. Component of the F(0) channel, it forms part of the peripheral stalk, linking F(1) to F(0). In Dehalococcoides mccartyi (strain ATCC BAA-2100 / JCM 16839 / KCTC 5957 / BAV1), this protein is ATP synthase subunit b.